Here is a 433-residue protein sequence, read N- to C-terminus: Pyrimidine-nucleoside phosphorylase (433 aa).

81–83 serves as a coordination point for phosphate; that stretch reads KHS. The K(+) site is built by G88 and T90. Phosphate contacts are provided by residues T92, 108–110, and T120; that span reads KMS. Substrate is bound by residues R168 and K187. K(+) contacts are provided by L243, A246, and E255.

It belongs to the thymidine/pyrimidine-nucleoside phosphorylase family. In terms of assembly, homodimer. The cofactor is K(+).

The catalysed reaction is uridine + phosphate = alpha-D-ribose 1-phosphate + uracil. It catalyses the reaction thymidine + phosphate = 2-deoxy-alpha-D-ribose 1-phosphate + thymine. It carries out the reaction 2'-deoxyuridine + phosphate = 2-deoxy-alpha-D-ribose 1-phosphate + uracil. Its function is as follows. Catalyzes phosphorolysis of the pyrimidine nucleosides uridine, thymidine and 2'-deoxyuridine with the formation of the corresponding pyrimidine base and ribose-1-phosphate. This is Pyrimidine-nucleoside phosphorylase (pdp) from Staphylococcus aureus (strain NCTC 8325 / PS 47).